A 1914-amino-acid chain; its full sequence is Fatty acid synthase beta subunit stcK (1914 aa).

The tract at residues 17-395 (LYACFGGQGP…LEGTGMNVVN (379 aa)) is acetyltransferase (AT) domain. The tract at residues 446 to 692 (TRLLGTPHVM…LIVEAPGVKD (247 aa)) is enoyl reductase (ER) domain. Residues 1009–1509 (GECAWGYAAL…RANDRLRMEI (501 aa)) are dehydratase (DH) domain. The 135-residue stretch at 1398–1532 (FLNRHGAPRV…VRVLKESTGE (135 aa)) folds into the MaoC-like domain. Positions 1548 to 1900 (YVFTGQGTQE…IRLVQGVTQS (353 aa)) are malonyl/palmitoyl transferase (MT/PT) domain.

The protein belongs to the fungal fatty acid synthetase subunit beta family. As to quaternary structure, [Alpha(6)beta(6)] hexamers of two multifunctional subunits (alpha and beta).

The catalysed reaction is acetyl-CoA + n malonyl-CoA + 2n NADPH + 4n H(+) = a long-chain-acyl-CoA + n CoA + n CO2 + 2n NADP(+).. The enzyme catalyses holo-[ACP] + acetyl-CoA = acetyl-[ACP] + CoA. It catalyses the reaction holo-[ACP] + malonyl-CoA = malonyl-[ACP] + CoA. It carries out the reaction a (3R)-hydroxyacyl-[ACP] = a (2E)-enoyl-[ACP] + H2O. The catalysed reaction is a 2,3-saturated acyl-[ACP] + NAD(+) = a (2E)-enoyl-[ACP] + NADH + H(+). The enzyme catalyses (9Z)-octadecenoyl-[ACP] + H2O = (9Z)-octadecenoate + holo-[ACP] + H(+). It functions in the pathway mycotoxin biosynthesis; sterigmatocystin biosynthesis. Its function is as follows. Fatty acid synthase beta subunit; part of the gene cluster that mediates the biosynthesis of sterigmatocystin (ST), a polyketide-derived furanocoumarin which is part of the most toxic and carcinogenic compounds among the known mycotoxins. The first step in the biosynthesis of sterigmatocystin is the production of hexanoate by the fatty acid synthase (FAS) units stcJ and stcK. The polyketide backbone is assembled by the non-reducing polyketide synthase stcA by condensation of the starter hexanoyl-CoA and 7 malonyl-CoA extender units followed by cyclization and release of norsolorinic acid. Norsolorinic acid is the first stable intermediate in the biosynthesis of sterigmatocystin and is converted into averantin (AVN) by the ketoreductase stcE which reduces the hexanoate ketone to an alcohol. Averantin is then oxidized into 5'-hydroxyaverantin (HAVN) by the cytochrome P450 monooxygenase stcF. 5'-hydroxyaverantin is further converted to 5'-oxyaverantin (OAVN) by the 5'-hydroxyaverantin dehydrogenase stcG. The next step is the conversion of OAVN into averufin (AVF) which is catalyzed by a yet to be identified enzyme. The cytochrome P450 monooxygenase stcB and the flavin-binding monooxygenase stcW are both required for the conversion of averufin to 1-hydroxyversicolorone. The esterase stcI probably catalyzes the formation of versiconal hemiacetal acetate from 1-hydroxyversicolorone. The oxydoreductase stcN then probably catalyzes the biosynthetic step from versiconal to versicolorin B (VERB). The next step is performed by the versicolorin B desaturase stcL to produce versicolorin A (VERA). The ketoreductase stcU and the cytochrome P450 monooxygenase stcS are involved in the conversion of versicolorin A to demethylsterigmatocystin. The Baeyer-Villiger oxidas stcQ and the reductase stcR might be involved in the biosynthetic step from versicolorin A to demethylsterigmatocystin. The final step in the biosynthesis of sterigmatocystin is the methylation of demethylsterigmatocystin catalyzed by the methyltransferase stcP. The protein is Fatty acid synthase beta subunit stcK of Emericella nidulans (strain FGSC A4 / ATCC 38163 / CBS 112.46 / NRRL 194 / M139) (Aspergillus nidulans).